A 476-amino-acid chain; its full sequence is MDYDAITALRDRHPAWRLLRAGNASLVLSFLGEFFVEANRGACPAGQVAEALDNHLYALSAGSGESRYPKEPRAYLEDWAATDAGYLRRFYPPGDDEVHYEVTPAFEKAYAWVVNLQSRSFVGTESRLHTVVALLRQIVHGTEVQPDVRLAELRRRRAELEAEIAAVEAGDIAVLDPTAVRDRYQQLSTTARELLSDFREVEENFRLLDRAARERIAAWEGSKGGLLEELVGSRSEITGSDQGRSFQAFYDFLLSEQRQAELAELIAKVSALDVLEADPRIRRIHHDWSEAADRAQRTVRQISEQLRRFLDDQVWLENRRVLDLVRAVESIALEVRDAPPTFGLEVDEPGIEIALPFERPLYQPPTEVAVESHVSAATEEVNADLLFAQTYIDQARLADTIRAVLPEDSSALLSDVVAVHPIEQGAAEIVGYLALNEDDLAIDVDDTEETVLEYPDPADPDITKRARLPKVTVRRR.

Residues 147-204 (DVRLAELRRRRAELEAEIAAVEAGDIAVLDPTAVRDRYQQLSTTARELLSDFREVEEN) are a coiled coil.

This is an uncharacterized protein from Mycolicibacterium smegmatis (strain ATCC 700084 / mc(2)155) (Mycobacterium smegmatis).